The primary structure comprises 113 residues: Ribonuclease P protein component (113 aa).

It belongs to the RnpA family. Consists of a catalytic RNA component (M1 or rnpB) and a protein subunit.

It catalyses the reaction Endonucleolytic cleavage of RNA, removing 5'-extranucleotides from tRNA precursor.. In terms of biological role, RNaseP catalyzes the removal of the 5'-leader sequence from pre-tRNA to produce the mature 5'-terminus. It can also cleave other RNA substrates such as 4.5S RNA. The protein component plays an auxiliary but essential role in vivo by binding to the 5'-leader sequence and broadening the substrate specificity of the ribozyme. In Clavibacter michiganensis subsp. michiganensis (strain NCPPB 382), this protein is Ribonuclease P protein component.